Consider the following 461-residue polypeptide: Serine carboxypeptidase-like 45 (461 aa).

An N-terminal signal peptide occupies residues 1-24; sequence MSPLQWLTISFALIIFHSLTVSSS. Intrachain disulfides connect C86-C340, C243-C261, and C286-C309. N168 carries an N-linked (GlcNAc...) asparagine glycan. S177 is an active-site residue. N244 carries N-linked (GlcNAc...) asparagine glycosylation. Residues D377 and H434 contribute to the active site.

It belongs to the peptidase S10 family. Ubiquitous.

The protein localises to the secreted. Functionally, probable carboxypeptidase. This Arabidopsis thaliana (Mouse-ear cress) protein is Serine carboxypeptidase-like 45 (SCPL45).